The sequence spans 413 residues: Serine/threonine transporter SstT (413 aa).

9 helical membrane passes run 22 to 42, 61 to 81, 89 to 109, 148 to 168, 189 to 209, 224 to 244, 305 to 325, 337 to 357, and 363 to 383; these read GLLL…VLGF, AVAP…KQLG, IVVL…LFSF, ALFN…GIAL, IVHF…AETL, LVVL…ILVF, MAGA…TLGI, VVAS…LLLI, and LFGI…VIGV.

Belongs to the dicarboxylate/amino acid:cation symporter (DAACS) (TC 2.A.23) family.

The protein resides in the cell inner membrane. It carries out the reaction L-serine(in) + Na(+)(in) = L-serine(out) + Na(+)(out). The catalysed reaction is L-threonine(in) + Na(+)(in) = L-threonine(out) + Na(+)(out). In terms of biological role, involved in the import of serine and threonine into the cell, with the concomitant import of sodium (symport system). The protein is Serine/threonine transporter SstT of Histophilus somni (strain 129Pt) (Haemophilus somnus).